The sequence spans 153 residues: Small ribosomal subunit protein bS6 (153 aa).

The tract at residues 94-153 is disordered; sequence EAHEEGPSAMMQKRDRDDRPRRDGDRPDRGPREDRGPRPPREGGFGDREDRPRRPREDRA.

Belongs to the bacterial ribosomal protein bS6 family.

Functionally, binds together with bS18 to 16S ribosomal RNA. In Agrobacterium fabrum (strain C58 / ATCC 33970) (Agrobacterium tumefaciens (strain C58)), this protein is Small ribosomal subunit protein bS6.